Reading from the N-terminus, the 216-residue chain is Probable GTP-binding protein EngB (216 aa).

Positions Glu27–Glu201 constitute an EngB-type G domain. GTP-binding positions include Gly35 to Ser42, Gly62 to Leu66, Asp80 to Gly83, Thr147 to Asp150, and Phe180 to Ser182. Ser42 and Thr64 together coordinate Mg(2+).

This sequence belongs to the TRAFAC class TrmE-Era-EngA-EngB-Septin-like GTPase superfamily. EngB GTPase family. Mg(2+) serves as cofactor.

In terms of biological role, necessary for normal cell division and for the maintenance of normal septation. The chain is Probable GTP-binding protein EngB from Yersinia pestis bv. Antiqua (strain Angola).